The chain runs to 271 residues: Mannosyl-3-phosphoglycerate phosphatase (271 aa).

Catalysis depends on Asp13, which acts as the Nucleophile. Mg(2+)-binding residues include Asp13, Asp15, and Asp214.

The protein belongs to the HAD-like hydrolase superfamily. MPGP family. Mg(2+) is required as a cofactor.

It localises to the cytoplasm. The catalysed reaction is 2-O-(alpha-D-mannosyl)-3-phosphoglycerate + H2O = (2R)-2-O-(alpha-D-mannosyl)-glycerate + phosphate. This Shigella sonnei (strain Ss046) protein is Mannosyl-3-phosphoglycerate phosphatase (yedP).